The sequence spans 218 residues: Guanylate kinase (218 aa).

Residues 10–190 form the Guanylate kinase-like domain; it reads GLLIILSSPS…TEERLKTIIT (181 aa). 17–24 contributes to the ATP binding site; sequence SPSGAGKS.

The protein belongs to the guanylate kinase family.

It is found in the cytoplasm. It carries out the reaction GMP + ATP = GDP + ADP. Essential for recycling GMP and indirectly, cGMP. In Jannaschia sp. (strain CCS1), this protein is Guanylate kinase.